A 294-amino-acid polypeptide reads, in one-letter code: MINGSIVALITPMNSDGSVDFASLERLVEFHIDQGTDAIVAVGTTGESATLPMNEHVTVVAQTVKFAAGRIPVIGGNGANATSEAIELTKSLSKVGVAAMLGVTPYYNKPTPKGLVAHYKAVAASTDIPQILYNVPGRTAVDMKPETVAELVGVSNIIGVKEATGDVSRVKRLRELCGNDFMLYSGDDATAREFLLLGGNGVISVANNIVPKAFKAMCDAALAGNAELAASIDEPLRGLYTTLFCEANPIPVKWAAHRMGLIECGHIRLPLTELSEQCHGLLLDAMTRAQIEVK.

Thr45 lines the pyruvate pocket. The Proton donor/acceptor role is filled by Tyr133. Lys161 acts as the Schiff-base intermediate with substrate in catalysis. Ile203 serves as a coordination point for pyruvate.

This sequence belongs to the DapA family. In terms of assembly, homotetramer; dimer of dimers.

It is found in the cytoplasm. The catalysed reaction is L-aspartate 4-semialdehyde + pyruvate = (2S,4S)-4-hydroxy-2,3,4,5-tetrahydrodipicolinate + H2O + H(+). It participates in amino-acid biosynthesis; L-lysine biosynthesis via DAP pathway; (S)-tetrahydrodipicolinate from L-aspartate: step 3/4. In terms of biological role, catalyzes the condensation of (S)-aspartate-beta-semialdehyde [(S)-ASA] and pyruvate to 4-hydroxy-tetrahydrodipicolinate (HTPA). This chain is 4-hydroxy-tetrahydrodipicolinate synthase, found in Shewanella sp. (strain MR-4).